A 129-amino-acid polypeptide reads, in one-letter code: Glycine cleavage system H protein (129 aa).

Residues 24–106 (TYTVGITEHA…YTDGWIFKIK (83 aa)) form the Lipoyl-binding domain. Lys65 is modified (N6-lipoyllysine).

This sequence belongs to the GcvH family. As to quaternary structure, the glycine cleavage system is composed of four proteins: P, T, L and H. The cofactor is (R)-lipoate.

In terms of biological role, the glycine cleavage system catalyzes the degradation of glycine. The H protein shuttles the methylamine group of glycine from the P protein to the T protein. This is Glycine cleavage system H protein from Klebsiella pneumoniae subsp. pneumoniae (strain ATCC 700721 / MGH 78578).